Consider the following 495-residue polypeptide: Amorpha-4,11-diene 12-monooxygenase (495 aa).

Over 1-6 (MKSILK) the chain is Cytoplasmic. Residues 7–29 (AMALSLTTSIALATILLFVYKFA) traverse the membrane as a helical; Signal-anchor for type II membrane protein segment. The Lumenal segment spans residues 30–495 (TRSKSTKKSL…KTELLLVPSF (466 aa)). Residues Asn-176, Asn-261, Asn-267, Asn-386, and Asn-417 are each glycosylated (N-linked (GlcNAc...) asparagine). Cys-439 lines the heme pocket.

It belongs to the cytochrome P450 family. Heme is required as a cofactor. As to expression, highly expressed both in apical and sub-apical cells of glandular secretory trichomes. Detected in flower buds, leaves and roots. Also present in non-glandular trichome cells.

The protein resides in the endoplasmic reticulum membrane. It catalyses the reaction (+)-amorpha-4,11-diene + 3 reduced [NADPH--hemoprotein reductase] + 3 O2 = (+)-artemisinate + 3 oxidized [NADPH--hemoprotein reductase] + 4 H2O + 4 H(+). The protein operates within sesquiterpene biosynthesis. Involved in the biosynthesis of the antimalarial endoperoxide artemisinin. Catalyzes three consecutive oxidations of amorpha-4,11-diene to produce artemisinic acid, with artemisinic alcohol and artemisinic aldehyde as intermediates products, but is unable to oxidize germacrene A. No activity with limonene, alpha-pinene, beta-pinene, pinocarveol, (-)-alloisolongifolene, caryophyllene, (-)-alpha-gurjunene, (+)-gamma-gurjunene, (+)-ledene, (+)-beta-selinene and (+)-valencene as substrates. The polypeptide is Amorpha-4,11-diene 12-monooxygenase (Artemisia annua (Sweet wormwood)).